A 334-amino-acid chain; its full sequence is MEERYEALKELGAGNFGVARLVRDKRSKELVAVKYIERGKKIDENVQREIINHRSLRHPNIIRFKEVCLTPTHLAIVMEYAAGGELFEQICTAGRFSEDEARYFFQQLISGVSYCHSLEICHRDLKLENTLLDGSPTPRVKICDFGYSKSALLHSKPKSTVGTPAYIAPEVLSRKEYDGKVADVWSCGVTLYVMLVGSYPFEDPGDPRNFRKTISRILGVQYSIPDYVRVSSDCRRLLSQIFVADPSKRITIPEIKKHTWFLKNLPKEISEREKADYKDTDAAPPTQAVEEIMRIIQEAKVPGDMAAADPALLAELAELKSDDEEEAADEYDTY.

One can recognise a Protein kinase domain in the interval 5–261; it reads YEALKELGAG…IPEIKKHTWF (257 aa). ATP is bound by residues 11-19 and lysine 34; that span reads LGAGNFGVA. The active-site Proton acceptor is the aspartate 124.

It belongs to the protein kinase superfamily. Ser/Thr protein kinase family. In terms of processing, autophosphorylated in presence of Ca(2+). In terms of tissue distribution, expressed in leaves and maturing seeds, but not in roots and stems of field-grown plants.

The protein resides in the cytoplasm. The protein localises to the nucleus. It carries out the reaction L-seryl-[protein] + ATP = O-phospho-L-seryl-[protein] + ADP + H(+). The enzyme catalyses L-threonyl-[protein] + ATP = O-phospho-L-threonyl-[protein] + ADP + H(+). Activated by phosphorylation. In terms of biological role, may play a role in signal transduction of hyperosmotic response. The protein is Serine/threonine-protein kinase SAPK3 (SAPK3) of Oryza sativa subsp. indica (Rice).